Here is a 157-residue protein sequence, read N- to C-terminus: Stalk-specific protein B (157 aa).

Residues 1-19 (MRSILILLSLLLTIAFASA) form the signal peptide.

It is found in the secreted. The protein is Stalk-specific protein B (staB) of Dictyostelium discoideum (Social amoeba).